The primary structure comprises 94 residues: MKTVTALLLVSLAVVAIEGQHMKSQRCVCLGAGLNMVKPVLIEKIEILPSSPSCGHMEVIATLKNGAGKRCLNPKSKFTKKIIDKIEKNNRNAR.

The first 19 residues, 1–19 (MKTVTALLLVSLAVVAIEG), serve as a signal peptide directing secretion. Cystine bridges form between Cys27–Cys54 and Cys29–Cys71.

The protein belongs to the intercrine alpha (chemokine CxC) family.

It localises to the secreted. In terms of biological role, ligand for cxcr3.2. Chemotactic for macrophages. This is C-X-C motif chemokine 11-1 (cxcl11.1) from Danio rerio (Zebrafish).